The following is a 308-amino-acid chain: Mitochondrial import receptor subunit TOM40B (308 aa).

The disordered stretch occupies residues 1–29 (MGNTLGLAPMGTLPRRSPRREEPLPNPGS). The interval 281-308 (PLPVTLALGAFLNHWRNRFHCGFSITVG) is required for mitochondrial targeting.

This sequence belongs to the Tom40 family. Forms part of the preprotein translocase of the outer mitochondrial membrane (TOM complex) containing TOMM22, TOMM40, TOMM40L and TOMM70. Interacts with mitochondrial targeting sequences.

It is found in the mitochondrion outer membrane. Potential channel-forming protein implicated in import of protein precursors into mitochondria. The chain is Mitochondrial import receptor subunit TOM40B (TOMM40L) from Homo sapiens (Human).